We begin with the raw amino-acid sequence, 350 residues long: Cytosolic Fe-S cluster assembly factor NBP35 (350 aa).

The interval 1–30 (MENGDIPEDANEHCPGPQSESAGKSDSCAG) is disordered. The [4Fe-4S] cluster site is built by C14, C28, C31, and C37. 67-74 (GKGGVGKS) lines the ATP pocket.

Belongs to the Mrp/NBP35 ATP-binding proteins family. NUBP1/NBP35 subfamily. As to quaternary structure, homodimer and homotetramer. Predominantly homodimeric. [4Fe-4S] cluster serves as cofactor.

The protein localises to the cytoplasm. Functionally, component of the cytosolic iron-sulfur (Fe-S) protein assembly (CIA) machinery. Required for maturation of extramitochondrial Fe-S proteins. Functions as a Fe-S scaffold, mediating the de novo assembly of an Fe-S cluster and its transfer to target apoproteins. Essential for embryo development. The polypeptide is Cytosolic Fe-S cluster assembly factor NBP35 (Arabidopsis thaliana (Mouse-ear cress)).